The primary structure comprises 80 residues: Translation initiation factor IF-1, chloroplastic (80 aa).

An S1-like domain is found at 1–72 (MKEHDLINME…TKGRILYRIR (72 aa)).

Belongs to the IF-1 family. As to quaternary structure, component of the 30S ribosomal translation pre-initiation complex which assembles on the 30S ribosome in the order IF-2 and IF-3, IF-1 and N-formylmethionyl-tRNA(fMet); mRNA recruitment can occur at any time during PIC assembly.

It localises to the plastid. The protein localises to the chloroplast. In terms of biological role, one of the essential components for the initiation of protein synthesis. Stabilizes the binding of IF-2 and IF-3 on the 30S subunit to which N-formylmethionyl-tRNA(fMet) subsequently binds. Helps modulate mRNA selection, yielding the 30S pre-initiation complex (PIC). Upon addition of the 50S ribosomal subunit IF-1, IF-2 and IF-3 are released leaving the mature 70S translation initiation complex. This Psilotum nudum (Whisk fern) protein is Translation initiation factor IF-1, chloroplastic.